The following is a 300-amino-acid chain: Cell adhesion molecule CEACAM19 (300 aa).

Positions 1–32 (MEIPMGTQGCFSKSLLLSASILVLWMLQGSQA) are cleaved as a signal peptide. Over 33–157 (ALYIQKIPEQ…PSTHLPTNAG (125 aa)) the chain is Extracellular. Asn-104 carries an N-linked (GlcNAc...) asparagine glycan. A helical transmembrane segment spans residues 158 to 178 (ILAATIIGSLAAGALLISCIA). At 179–300 (YLLVTRNWRG…APYCQLVPTS (122 aa)) the chain is on the cytoplasmic side. The interval 259–291 (SINPARPLPTPPHLQAEPENHQYQQDLLNPDPA) is disordered.

Belongs to the immunoglobulin superfamily. CEA family. Ubiquitous with highest expression in prostate, uterus, fetal brain, mammary gland, adrenal gland, skeletal muscle, small intestine, and kidney, and lower expression in lung, cerebellum, testis, liver, pancreas, bone marrow and ovary.

The protein resides in the membrane. The chain is Cell adhesion molecule CEACAM19 from Homo sapiens (Human).